Reading from the N-terminus, the 953-residue chain is Coiled-coil domain-containing protein 14 (953 aa).

A compositionally biased stretch (basic residues) spans M1–K21. Disordered stretches follow at residues M1–V22 and S52–T72. S124 carries the post-translational modification Phosphoserine. 2 disordered regions span residues S126 to L189 and P268 to A287. Residues Y145–K154 show a composition bias toward basic residues. Over residues D169–S187 the composition is skewed to basic and acidic residues. Positions E277–A287 are enriched in polar residues. Coiled-coil stretches lie at residues L383 to K413 and A483 to E618. Phosphoserine occurs at positions 670, 754, and 798.

In terms of assembly, interacts with CEP63.

The protein resides in the cytoplasm. The protein localises to the cytoskeleton. It is found in the microtubule organizing center. It localises to the centrosome. Its subcellular location is the centriolar satellite. Its function is as follows. Negatively regulates centriole duplication. Negatively regulates CEP63 and CDK2 centrosomal localization. This is Coiled-coil domain-containing protein 14 (CCDC14) from Homo sapiens (Human).